Consider the following 2169-residue polypeptide: Voltage-dependent L-type calcium channel subunit alpha-1C (2169 aa).

The Cytoplasmic segment spans residues 1 to 154 (MIRAFAQPST…RACISIVEWK (154 aa)). The segment at 77–98 (GAALSWLAAIDAARQAKLMGSA) is calmodulin-binding. Residues 104–128 (STVSSTQRKRQQYGKPKKQGGTTAT) are disordered. Residues 110–121 (QRKRQQYGKPKK) show a composition bias toward basic residues. One copy of the I repeat lies at 141–438 (NPIRRACISI…LVLGVLSGEF (298 aa)). The helical transmembrane segment at 155-173 (PFEIIILLTIFANCVALAI) threads the bilayer. The Extracellular segment spans residues 174 to 188 (YIPFPEDDSNATNSN). Asparagine 183 carries an N-linked (GlcNAc...) asparagine glycan. Residues 189 to 209 (LERVEYLFLIIFTVEAFLKVI) traverse the membrane as a helical segment. The Cytoplasmic portion of the chain corresponds to 210-218 (AYGLLFHPN). A helical membrane pass occupies residues 219 to 239 (AYLRNGWNLLDFIIVVVGLFS). The Extracellular segment spans residues 240–262 (AILEQATKADGANALGGKGAGFD). The chain crosses the membrane as a helical span at residues 263 to 281 (VKALRAFRVLRPLRLVSGV). The Cytoplasmic segment spans residues 282–298 (PSLQVVLNSIIKAMVPL). A helical transmembrane segment spans residues 299 to 320 (LHIALLVLFVIIIYAIIGLELF). Over 321–380 (MGKMHKTCYNQEGIIDVPAEEDPSPCALETGHGRQCQNGTVCKPGWDGPKHGITNFDNFA) the chain is Extracellular. 2 disulfide bridges follow: cysteine 328–cysteine 356 and cysteine 346–cysteine 362. Asparagine 358 carries an N-linked (GlcNAc...) asparagine glycan. The segment at residues 381–402 (FAMLTVFQCITMEGWTDVLYWM) is an intramembrane region (pore-forming). The short motif at 391 to 394 (TMEG) is the Selectivity filter of repeat I element. Residue glutamate 393 coordinates Ca(2+). Residues 403–410 (QDAMGYEL) lie on the Extracellular side of the membrane. A helical membrane pass occupies residues 411-431 (PWVYFVSLVIFGSFFVLNLVL). The Cytoplasmic segment spans residues 432–554 (GVLSGEFSKE…RKCRAAVKSN (123 aa)). Residues 458-475 (QQLEEDLKGYLDWITQAE) are AID/alpha-interaction domain; mediates interaction with the beta subunit. The disordered stretch occupies residues 479–511 (PENEDEGMDEDKPRNMSMPTSETESVNTENVAG). Residues 495-508 (SMPTSETESVNTEN) show a composition bias toward polar residues. A Phosphoserine modification is found at serine 499. Threonine 506 bears the Phosphothreonine mark. An II repeat occupies 540 to 786 (NRFCRRKCRA…LFLAIAVDNL (247 aa)). Residues 555-573 (VFYWLVIFLVFLNTLTIAS) traverse the membrane as a helical segment. The Extracellular portion of the chain corresponds to 574–584 (EHYNQPHWLTE). Residues 585-605 (VQDTANKALLALFTAEMLLKM) traverse the membrane as a helical segment. The Cytoplasmic portion of the chain corresponds to 606–616 (YSLGLQAYFVS). The chain crosses the membrane as a helical span at residues 617-636 (LFNRFDCFIVCGGILETILV). Over 637 to 645 (ETKIMSPLG) the chain is Extracellular. The helical transmembrane segment at 646 to 664 (ISCWRCVRLLRIFKITRYW) threads the bilayer. The Cytoplasmic segment spans residues 665 to 683 (NSLSNLVASLLNSLRSIAS). A helical transmembrane segment spans residues 684-703 (LLLLLFLFIIIFSLLGMQLF). The Extracellular segment spans residues 704-723 (GGKFNFDEMQTRRSTFDNFP). Residues 724–745 (QSLLTVFQILTGEDWNSVMYDG) constitute an intramembrane region (pore-forming). Positions 734–737 (TGED) match the Selectivity filter of repeat II motif. Glutamate 736 is a binding site for Ca(2+). Residues 746 to 755 (IMAYGGPSFP) are Extracellular-facing. Residues 756–775 (GMLVCIYFIILFISPNYILL) form a helical membrane-spanning segment. Over 776–930 (NLFLAIAVDN…LQCHRIVNDT (155 aa)) the chain is Cytoplasmic. Residues 794 to 891 (SAQKEEEEEK…EMPVGPRPRP (98 aa)) are disordered. Positions 813–836 (SPEKKQEVMEKPAVEESKEEKIEL) are enriched in basic and acidic residues. 2 positions are modified to phosphoserine: serine 838 and serine 845. The interval 859 to 906 (SENEDKSPHSNPDTAGEEDEEEPEMPVGPRPRPLSELHLKEKAVPMPE) is interaction with STAC2. Acidic residues predominate over residues 873–882 (AGEEDEEEPE). One copy of the III repeat lies at 917 to 1198 (NRFRLQCHRI…IFVGFVIVTF (282 aa)). The helical transmembrane segment at 931–949 (IFTNLILFFILLSSISLAA) threads the bilayer. Residues 950 to 961 (EDPVQHTSFRNH) lie on the Extracellular side of the membrane. Residues 962–981 (ILFYFDIVFTTIFTIEIALK) form a helical membrane-spanning segment. Over 982–997 (MTAYGAFLHKGSFCRN) the chain is Cytoplasmic. The helical transmembrane segment at 998 to 1016 (YFNILDLLVVSVSLISFGI) threads the bilayer. Over 1017-1023 (QSSAINV) the chain is Extracellular. A helical transmembrane segment spans residues 1024–1041 (VKILRVLRVLRPLRINRA). At 1042-1060 (KGLKHVVQCVFVAIRTIGN) the chain is on the cytoplasmic side. The helical transmembrane segment at 1061–1080 (IVIVTTLLQFMFACIGVQLF) threads the bilayer. The Extracellular segment spans residues 1081 to 1130 (KGKLYTCSDSSKQTEAESKGNYITYKTGEVDHPIIQPRSWENSKFDFDNV). Residues 1118–1207 (RSWENSKFDF…FQEQGEQEYK (90 aa)) are dihydropyridine binding. The pore-forming intramembrane region spans 1131 to 1151 (LAAMMALFTVSTFEGWPELLY). The short motif at 1142 to 1145 (TFEG) is the Selectivity filter of repeat III element. Ca(2+) is bound at residue glutamate 1144. The Extracellular segment spans residues 1152 to 1168 (RSIDSHTEDKGPIYNYR). Residues 1169-1190 (VEISIFFIIYIIIIAFFMMNIF) form a helical membrane-spanning segment. Topologically, residues 1191–1248 (VGFVIVTFQEQGEQEYKNCELDKNQRQCVEYALKARPLPRYIPKNQHQYKVWYVVNST) are cytoplasmic. An IV repeat occupies 1235–1508 (NQHQYKVWYV…LFVAVIMDNF (274 aa)). A helical membrane pass occupies residues 1249-1270 (YFEYLMFVLILLNTICLAMQHY). Topologically, residues 1271–1278 (GQSCLFKI) are extracellular. The helical transmembrane segment at 1279 to 1300 (AMNILNMLFTGLFTVEMILKLI) threads the bilayer. The Cytoplasmic segment spans residues 1301–1310 (AFKPKHYFCD). Residues 1311-1330 (AWNTFDALIVVGSIVDIAIT) traverse the membrane as a helical segment. The Extracellular segment spans residues 1331 to 1353 (EVHPAEHTQCSPSMSAEENSRIS). A helical membrane pass occupies residues 1354 to 1372 (ITFFRLFRVMRLVKLLSRG). The Cytoplasmic portion of the chain corresponds to 1373 to 1390 (EGIRTLLWTFIKSFQALP). A helical transmembrane segment spans residues 1391-1411 (YVALLIVMLFFIYAVIGMQVF). Residues 1412–1433 (GKIALNDTTEINRNNNFQTFPQ) lie on the Extracellular side of the membrane. N-linked (GlcNAc...) asparagine glycosylation occurs at asparagine 1417. An intramembrane region (pore-forming) is located at residues 1434–1452 (AVLLLFRCATGEAWQDIML). A Selectivity filter of repeat IV motif is present at residues 1443–1446 (TGEA). Over 1453–1480 (ACMPGKKCAPESEPSNSTEGETPCGSSF) the chain is Extracellular. The tract at residues 1459–1527 (KCAPESEPSN…LGPHHLDEFK (69 aa)) is dihydropyridine binding. Residues cysteine 1460 and cysteine 1476 are joined by a disulfide bond. A glycan (N-linked (GlcNAc...) asparagine) is linked at asparagine 1468. A phenylalkylamine binding region spans residues 1473–1515 (ETPCGSSFAVFYFISFYMLCAFLIINLFVAVIMDNFDYLTRDW). Residues 1481-1505 (AVFYFISFYMLCAFLIINLFVAVIM) traverse the membrane as a helical segment. Over 1506 to 2169 (DNFDYLTRDW…PDSRSYVSNL (664 aa)) the chain is Cytoplasmic. An important for interaction with STAC1, STAC2 and STAC3 region spans residues 1640–1667 (DEVTVGKFYATFLIQEYFRKFKKRKEQG). A calmodulin-binding region spans residues 1640-1673 (DEVTVGKFYATFLIQEYFRKFKKRKEQGLVGKPS). The segment at 1646-1666 (KFYATFLIQEYFRKFKKRKEQ) is calmodulin-binding IQ region. Residues 1680-1699 (LQAGLRTLHDIGPEIRRAIS) are important for localization in at the junctional membrane. A phosphoserine mark is found at serine 1699 and serine 1720. 2 stretches are compositionally biased toward polar residues: residues 1761 to 1770 (KTGNNQADTE) and 1780 to 1792 (STFT…STGS). The tract at residues 1761–1793 (KTGNNQADTESPSHEKLVDSTFTPSSYSSTGSN) is disordered. A Phosphoserine; by PKA modification is found at serine 1927. Positions 1970 to 1998 (RSHSPSTFPRPRPTPPVTPGSRGRPLQPI) are disordered. Residues 1977–1987 (FPRPRPTPPVT) are compositionally biased toward pro residues.

This sequence belongs to the calcium channel alpha-1 subunit (TC 1.A.1.11) family. CACNA1C subfamily. Component of a calcium channel complex consisting of a pore-forming alpha subunit (CACNA1C) and ancillary beta, gamma and delta subunits. The channel complex contains alpha, beta, gamma and delta subunits in a 1:1:1:1 ratio, i.e. it contains only one of each type of subunit. CACNA1C channel activity is modulated by ancillary subunits, such as CACNB1, CACNB2, CACNB3, CACNA2D1 and CACNA2D4. Interacts with the gamma subunits CACNG4, CACNG6, CACNG7 and CACNG8. Interacts with CACNB1. Interacts with CACNB2. Identified in a complex with CACNA2D4 and CACNB3. Interacts with CACNB3. Interacts with CACNA2D1. Interacts with CACNA2D4. Interacts with CALM1. Interacts (via the N-terminus and the C-terminal C and IQ motifs) with CABP1; this inhibits Ca(2+)-dependent channel inactivation. The binding via the C motif is calcium independent whereas the binding via IQ requires the presence of calcium and is mutually exclusive with calmodulin binding. The binding to the cytoplasmic N-terminal domain is calcium independent but is essential for the channel modulation. Interacts (via C-terminal CDB motif) with CABP5; in a calcium-dependent manner. Interacts with CIB1; the interaction increases upon cardiomyocytes hypertrophy. Interacts with STAC2 and STAC3; this inhibits channel inactivation. Phosphorylation by PKA at Ser-1927 activates the channel. Elevated levels of blood glucose lead to increased phosphorylation by PKA. Is also phosphorylated in vitro by CaM-kinase II, PKC and CGPK. In terms of tissue distribution, detected in hippocampus and brain cortex, on neuronal cell bodies and dendrites, and in post-synaptic density in brain (at protein level). Isoforms 4 and 5 are expressed throughout the central nervous system, with highest levels in the olfactory bulb and cerebellum. Also expressed in heart, pituitary, adrenal gland, liver, kidney, and in a much lesser extent in testes and spleen.

It is found in the cell membrane. The protein localises to the sarcolemma. It localises to the perikaryon. Its subcellular location is the postsynaptic density membrane. The protein resides in the cell projection. It is found in the dendrite. The protein localises to the T-tubule. It carries out the reaction Ca(2+)(in) = Ca(2+)(out). With respect to regulation, inhibited by dihydropyridines (DHP), such as isradipine. Inhibited by nifedipine. Channel activity is regulated by Ca(2+) and calmodulin. Binding of STAC1, STAC2 or STAC3 to a region that overlaps with the calmodulin binding site inhibits channel inactivation by Ca(2+) and calmodulin. Binding of calmodulin or CABP1 at the same regulatory sites results in opposite effects on the channel function. Shear stress and pressure increases calcium channel activity. Its function is as follows. Pore-forming, alpha-1C subunit of the voltage-gated calcium channel that gives rise to L-type calcium currents. Mediates influx of calcium ions into the cytoplasm, and thereby triggers calcium release from the sarcoplasm. Plays an important role in excitation-contraction coupling in the heart. Required for normal heart development and normal regulation of heart rhythm. Required for normal contraction of smooth muscle cells in blood vessels and in the intestine. Essential for normal blood pressure regulation via its role in the contraction of arterial smooth muscle cells. Long-lasting (L-type) calcium channels belong to the 'high-voltage activated' (HVA) group. The sequence is that of Voltage-dependent L-type calcium channel subunit alpha-1C (Cacna1c) from Rattus norvegicus (Rat).